The sequence spans 344 residues: Mitochondrial mRNA pseudouridine synthase Rpusd3 (344 aa).

Residues 1–36 constitute a mitochondrion transit peptide; the sequence is MGALRVLRYVSMIWRPELGSCARQRDAGFGTEARRP. Positions 25–53 are disordered; sequence RDAGFGTEARRPSQPHRSSKHKDLVEDQP.

The protein belongs to the pseudouridine synthase RluA family. Forms a regulatory protein-RNA complex, consisting of RCC1L, NGRN, RPUSD3, RPUSD4, TRUB2, FASTKD2 and 16S mt-rRNA.

It localises to the mitochondrion matrix. The catalysed reaction is a uridine in mRNA = a pseudouridine in mRNA. Catalyzes uridine to pseudouridine isomerization (pseudouridylation) of specific mitochondrial mRNAs (mt-mRNAs), a post-transcriptional modification necessary for their translation. Acts at position 390 in COXI mt-mRNA and at position 697-699 in mitochondrial COXIII mt-mRNA. As a component of a functional protein-RNA module, consisting of RCC1L, NGRN, RPUSD3, RPUSD4, TRUB2, FASTKD2 and 16S mitochondrial ribosomal RNA (16S mt-rRNA), controls 16S mt-rRNA abundance and may play a role in mitochondrial ribosome biogenesis. This Mus musculus (Mouse) protein is Mitochondrial mRNA pseudouridine synthase Rpusd3 (Rpusd3).